The following is a 459-amino-acid chain: Exodeoxyribonuclease 7 large subunit (459 aa).

Belongs to the XseA family. As to quaternary structure, heterooligomer composed of large and small subunits.

Its subcellular location is the cytoplasm. It catalyses the reaction Exonucleolytic cleavage in either 5'- to 3'- or 3'- to 5'-direction to yield nucleoside 5'-phosphates.. Bidirectionally degrades single-stranded DNA into large acid-insoluble oligonucleotides, which are then degraded further into small acid-soluble oligonucleotides. In Yersinia pestis bv. Antiqua (strain Antiqua), this protein is Exodeoxyribonuclease 7 large subunit.